A 486-amino-acid polypeptide reads, in one-letter code: Ribosomal RNA small subunit methyltransferase F (486 aa).

S-adenosyl-L-methionine contacts are provided by residues Ala-124–Lys-130, Glu-148, Asp-175, and Asp-193. Cys-246 functions as the Nucleophile in the catalytic mechanism.

This sequence belongs to the class I-like SAM-binding methyltransferase superfamily. RsmB/NOP family.

The protein localises to the cytoplasm. The enzyme catalyses cytidine(1407) in 16S rRNA + S-adenosyl-L-methionine = 5-methylcytidine(1407) in 16S rRNA + S-adenosyl-L-homocysteine + H(+). Functionally, specifically methylates the cytosine at position 1407 (m5C1407) of 16S rRNA. This chain is Ribosomal RNA small subunit methyltransferase F, found in Shewanella baltica (strain OS155 / ATCC BAA-1091).